A 207-amino-acid polypeptide reads, in one-letter code: Segregation and condensation protein B (207 aa).

The protein belongs to the ScpB family. Homodimer. Homodimerization may be required to stabilize the binding of ScpA to the Smc head domains. Component of a cohesin-like complex composed of ScpA, ScpB and the Smc homodimer, in which ScpA and ScpB bind to the head domain of Smc. The presence of the three proteins is required for the association of the complex with DNA.

Its subcellular location is the cytoplasm. In terms of biological role, participates in chromosomal partition during cell division. May act via the formation of a condensin-like complex containing Smc and ScpA that pull DNA away from mid-cell into both cell halves. The protein is Segregation and condensation protein B of Mycoplasma genitalium (strain ATCC 33530 / DSM 19775 / NCTC 10195 / G37) (Mycoplasmoides genitalium).